The primary structure comprises 588 residues: MDDRGNNSGEVGEFASSSMIQESIDLKLLAAESLIWTEKNVTYFGPLGKFPGKIVITRYRMVFLVGDGGKMYEQWKLDIPLGQVSRIEKVGRKTTSVAKRGDDNYGFTIYCKDYRVYRFTCNPASSDRKNVCDSLNRYAFPLSHNLPMFASVHAAETPRLMKDGWKIYSAEKEYERLGIPNSRLWKEVDINKDYKFSETYPRTFVIPTVSWEEGKPFVKKLGEFRSKERIPVLSWINQTTLASISRCSQPMTGISGKRSAEDERHLTNIMNANANCRELLILDARPAVNAKLNKAKGGGYEENYVNAPLTFLNIHNIHVVRDSLKRLLAALIPRVDEKGYYKALDESKWLNHVQSILEGAVKAVFNVDTEKQSVLIHCSDGWDRTAQLTSLAMIQLDSYYRTIEGFIVLIEKEWCSFGHKFGERIGHGDDNYSDGERSPVFVQFCDCLWQIMRQFPWAFEFTQELLICMLDELYACRYGTFLYNSEKIRLKDKKCDETTISFWSYVLENKKKFRNPMFKHGKSNKVINVNPSLCGLHVWIDYYARSNPYVVTPNHEDVQQPGAQFVDEKKQLLDEIMALDDAAQKLTA.

One can recognise a GRAM domain in the interval 20-91 (IQESIDLKLL…GQVSRIEKVG (72 aa)). Residues 164–543 (GWKIYSAEKE…CGLHVWIDYY (380 aa)) enclose the Myotubularin phosphatase domain. A 1,2-diacyl-sn-glycero-3-phospho-(1D-myo-inositol-3,5-bisphosphate)-binding residues include Asn-293, Asn-316, and Ile-317. Positions 293, 316, and 317 each coordinate a 1,2-diacyl-sn-glycero-3-phospho-(1D-myo-inositol-3-phosphate). Catalysis depends on Cys-378, which acts as the Phosphocysteine intermediate. A 1,2-diacyl-sn-glycero-3-phospho-(1D-myo-inositol-3,5-bisphosphate)-binding residues include Ser-379, Asp-380, Gly-381, Trp-382, Asp-383, Arg-384, Lys-420, and Arg-424. The a 1,2-diacyl-sn-glycero-3-phospho-(1D-myo-inositol-3-phosphate) site is built by Ser-379, Asp-380, Gly-381, Trp-382, Asp-383, and Arg-384. Phosphate is bound at residue Ser-379. Phosphate-binding residues include Gly-381, Trp-382, Asp-383, and Arg-384. Arg-424 lines the a 1,2-diacyl-sn-glycero-3-phospho-(1D-myo-inositol-3-phosphate) pocket. A coiled-coil region spans residues 563-588 (AQFVDEKKQLLDEIMALDDAAQKLTA).

The protein belongs to the protein-tyrosine phosphatase family. Non-receptor class myotubularin subfamily. In terms of tissue distribution, expressed in embryo, larva and in adults. Expressed in a few head and tail neurons. Expressed in hypodermis, body wall and pharyngeal muscles, sheath cells, vulva, distal tip cells and coelomocytes.

It is found in the cell membrane. The protein resides in the cell projection. It localises to the phagocytic cup. The protein localises to the apical cell membrane. Its subcellular location is the cytoplasmic granule membrane. It catalyses the reaction a 1,2-diacyl-sn-glycero-3-phospho-(1D-myo-inositol-3,5-bisphosphate) + H2O = a 1,2-diacyl-sn-glycero-3-phospho-(1D-myo-inositol-5-phosphate) + phosphate. The enzyme catalyses a 1,2-diacyl-sn-glycero-3-phospho-(1D-myo-inositol-3-phosphate) + H2O = a 1,2-diacyl-sn-glycero-3-phospho-(1D-myo-inositol) + phosphate. It carries out the reaction 1,2-dioctanoyl-sn-glycero-3-phospho-(1-D-myo-inositol-3-phosphate) + H2O = 1,2-dioctanoyl-sn-glycero-3-phospho-(1D-myo-inositol) + phosphate. Lipid phosphatase that specifically dephosphorylates phosphatidylinositol 3-phosphate (PI3P) and phosphatidylinositol 3,5-bisphosphate (PI(3,5)P2). Negatively regulates accumulation of PI3P on intracellular vesicles. Negatively regulates phagocytosis of apoptotic cells probably by limiting the recruitment and/or the activation of ced-5, ced-2 and ced-12 complex. In addition, may positively regulate phagosome maturation by promoting recycling of apoptotic receptor ced-1 back to the plasma membrane. Essential for embryonic and larval development. May promote migration of distal tip cells. The chain is Phosphatidylinositol-3,5-bisphosphate 3-phosphatase mtm-1 from Caenorhabditis elegans.